The chain runs to 474 residues: Trifunctional enzyme subunit beta, mitochondrial (474 aa).

Residues 1-33 constitute a mitochondrion transit peptide; the sequence is MTILTYPFKNLPTASKWALRFSIRPLSCSSQLR. Lys-72 is subject to N6-acetyllysine; alternate. The residue at position 72 (Lys-72) is an N6-succinyllysine; alternate. The active-site Acyl-thioester intermediate is Cys-138. An intramembrane segment occupies 173 to 220; the sequence is IRHSRKMRKLMLDLNKAKSMGQRLSLISKFRFNFLAPELPAVSEFSTS. Residue Lys-188 is modified to N6-acetyllysine; alternate. Lys-188 carries the post-translational modification N6-succinyllysine; alternate. Lys-190, Lys-272, and Lys-291 each carry N6-succinyllysine. At Lys-293 the chain carries N6-acetyllysine; alternate. Position 293 is an N6-succinyllysine; alternate (Lys-293). Lys-298 carries the post-translational modification N6-acetyllysine. The residue at position 332 (Lys-332) is an N6-acetyllysine; alternate. Lys-332 bears the N6-succinyllysine; alternate mark. 2 positions are modified to N6-acetyllysine: Lys-348 and Lys-361. Residue Cys-458 is the Proton donor/acceptor of the active site.

Belongs to the thiolase-like superfamily. Thiolase family. In terms of assembly, heterotetramer of 2 alpha/HADHA and 2 beta/HADHB subunits; forms the mitochondrial trifunctional enzyme. Also purified as higher order heterooligomers including a 4 alpha/HADHA and 4 beta/HADHB heterooligomer which physiological significance remains unclear. The mitochondrial trifunctional enzyme interacts with MTLN. Interacts with RSAD2/viperin.

The protein localises to the mitochondrion. It is found in the mitochondrion inner membrane. The protein resides in the mitochondrion outer membrane. Its subcellular location is the endoplasmic reticulum. It carries out the reaction an acyl-CoA + acetyl-CoA = a 3-oxoacyl-CoA + CoA. It catalyses the reaction butanoyl-CoA + acetyl-CoA = 3-oxohexanoyl-CoA + CoA. The catalysed reaction is hexanoyl-CoA + acetyl-CoA = 3-oxooctanoyl-CoA + CoA. The enzyme catalyses octanoyl-CoA + acetyl-CoA = 3-oxodecanoyl-CoA + CoA. It carries out the reaction decanoyl-CoA + acetyl-CoA = 3-oxododecanoyl-CoA + CoA. It catalyses the reaction dodecanoyl-CoA + acetyl-CoA = 3-oxotetradecanoyl-CoA + CoA. The catalysed reaction is tetradecanoyl-CoA + acetyl-CoA = 3-oxohexadecanoyl-CoA + CoA. It participates in lipid metabolism; fatty acid beta-oxidation. Functionally, mitochondrial trifunctional enzyme catalyzes the last three of the four reactions of the mitochondrial beta-oxidation pathway. The mitochondrial beta-oxidation pathway is the major energy-producing process in tissues and is performed through four consecutive reactions breaking down fatty acids into acetyl-CoA. Among the enzymes involved in this pathway, the trifunctional enzyme exhibits specificity for long-chain fatty acids. Mitochondrial trifunctional enzyme is a heterotetrameric complex composed of two proteins, the trifunctional enzyme subunit alpha/HADHA carries the 2,3-enoyl-CoA hydratase and the 3-hydroxyacyl-CoA dehydrogenase activities, while the trifunctional enzyme subunit beta/HADHB described here bears the 3-ketoacyl-CoA thiolase activity. The chain is Trifunctional enzyme subunit beta, mitochondrial (HADHB) from Homo sapiens (Human).